We begin with the raw amino-acid sequence, 530 residues long: uncharacterized protein (530 aa).

It belongs to the mimivirus R640 family.

This is an uncharacterized protein from Acanthamoeba polyphaga (Amoeba).